A 207-amino-acid chain; its full sequence is Sodium/potassium-transporting ATPase subunit beta-1-interacting protein 1 (207 aa).

Transmembrane regions (helical) follow at residues 2 to 22 (GKCSGRCTLVAFCCLQLVAAL), 35 to 55 (APILANFLHIMAVILGIFGTV), and 62 to 82 (LILYAAWLVLWVGWNAFIICF). The N-linked (GlcNAc...) asparagine glycan is linked to asparagine 100. The helical transmembrane segment at 147-167 (ALSSALQIFLALFGFVFACYV) threads the bilayer.

The protein belongs to the NKAIN family. In terms of assembly, interacts with ATP1B1 C-terminus. In terms of tissue distribution, detected in the brain only and specifically in neurons. Expressed in multiple regions such as cerebral cortex, thalamus, hippocampus, olfactory bulb and brainstem as well as in cerebellum with high expression in granular cell layer.

The protein localises to the cell membrane. This Mus musculus (Mouse) protein is Sodium/potassium-transporting ATPase subunit beta-1-interacting protein 1 (Nkain1).